A 339-amino-acid polypeptide reads, in one-letter code: 3,4-dihydroxy-2-butanone 4-phosphate synthase (339 aa).

The interval 1–206 (MKFVSVEQAI…YRLKHESLIK (206 aa)) is DHBP synthase. D-ribulose 5-phosphate-binding positions include 27-28 (RE), aspartate 32, 139-143 (RTGHT), and glutamate 163. A Mg(2+)-binding site is contributed by glutamate 28. Histidine 142 contacts Mg(2+). Positions 207–339 (LEEKSQSVLA…GLNLKACNFN (133 aa)) are GTP cyclohydrolase II-like.

In the N-terminal section; belongs to the DHBP synthase family. It in the C-terminal section; belongs to the GTP cyclohydrolase II family. Mg(2+) is required as a cofactor. Mn(2+) serves as cofactor.

It catalyses the reaction D-ribulose 5-phosphate = (2S)-2-hydroxy-3-oxobutyl phosphate + formate + H(+). It participates in cofactor biosynthesis; riboflavin biosynthesis; 2-hydroxy-3-oxobutyl phosphate from D-ribulose 5-phosphate: step 1/1. In terms of biological role, catalyzes the conversion of D-ribulose 5-phosphate to formate and 3,4-dihydroxy-2-butanone 4-phosphate. The polypeptide is 3,4-dihydroxy-2-butanone 4-phosphate synthase (ribB) (Campylobacter jejuni subsp. jejuni serotype O:2 (strain ATCC 700819 / NCTC 11168)).